Consider the following 253-residue polypeptide: Ribosome-inactivating protein saporin-5 (253 aa).

E176 is an active-site residue.

The protein belongs to the ribosome-inactivating protein family. Type 1 RIP subfamily.

It carries out the reaction Endohydrolysis of the N-glycosidic bond at one specific adenosine on the 28S rRNA.. In terms of biological role, ribosome-inactivating protein of type 1, inhibits protein synthesis in animal cells. This Saponaria officinalis (Common soapwort) protein is Ribosome-inactivating protein saporin-5 (SAP5).